Here is a 223-residue protein sequence, read N- to C-terminus: Deoxyribose-phosphate aldolase (223 aa).

Aspartate 89 functions as the Proton donor/acceptor in the catalytic mechanism. Lysine 152 functions as the Schiff-base intermediate with acetaldehyde in the catalytic mechanism. The Proton donor/acceptor role is filled by lysine 181.

This sequence belongs to the DeoC/FbaB aldolase family. DeoC type 1 subfamily.

It is found in the cytoplasm. The enzyme catalyses 2-deoxy-D-ribose 5-phosphate = D-glyceraldehyde 3-phosphate + acetaldehyde. Its pathway is carbohydrate degradation; 2-deoxy-D-ribose 1-phosphate degradation; D-glyceraldehyde 3-phosphate and acetaldehyde from 2-deoxy-alpha-D-ribose 1-phosphate: step 2/2. Functionally, catalyzes a reversible aldol reaction between acetaldehyde and D-glyceraldehyde 3-phosphate to generate 2-deoxy-D-ribose 5-phosphate. The sequence is that of Deoxyribose-phosphate aldolase from Listeria monocytogenes serovar 1/2a (strain ATCC BAA-679 / EGD-e).